The chain runs to 154 residues: NADPH-dependent 7-cyano-7-deazaguanine reductase (154 aa).

The segment covering 1-23 (MPNTDVSSLSMLGQQTETAQSPE) has biased composition (polar residues). The disordered stretch occupies residues 1 to 26 (MPNTDVSSLSMLGQQTETAQSPEQAV). Cysteine 52 serves as the catalytic Thioimide intermediate. The active-site Proton donor is aspartate 59. Residues 74–76 (VES) and 93–94 (HE) each bind substrate.

It belongs to the GTP cyclohydrolase I family. QueF type 1 subfamily.

The protein localises to the cytoplasm. It catalyses the reaction 7-aminomethyl-7-carbaguanine + 2 NADP(+) = 7-cyano-7-deazaguanine + 2 NADPH + 3 H(+). It participates in tRNA modification; tRNA-queuosine biosynthesis. Functionally, catalyzes the NADPH-dependent reduction of 7-cyano-7-deazaguanine (preQ0) to 7-aminomethyl-7-deazaguanine (preQ1). The polypeptide is NADPH-dependent 7-cyano-7-deazaguanine reductase (Rhizobium leguminosarum bv. trifolii (strain WSM2304)).